The following is a 556-amino-acid chain: Phenylalanine--tRNA ligase beta subunit (556 aa).

The 76-residue stretch at 278-353 (LTPKRFEVEL…IAYGYNNIEP (76 aa)) folds into the B5 domain. Mg(2+) contacts are provided by aspartate 331, aspartate 337, glutamate 340, and aspartate 341.

It belongs to the phenylalanyl-tRNA synthetase beta subunit family. Type 2 subfamily. In terms of assembly, tetramer of two alpha and two beta subunits. Mg(2+) is required as a cofactor.

It is found in the cytoplasm. It carries out the reaction tRNA(Phe) + L-phenylalanine + ATP = L-phenylalanyl-tRNA(Phe) + AMP + diphosphate + H(+). The sequence is that of Phenylalanine--tRNA ligase beta subunit from Pyrococcus abyssi (strain GE5 / Orsay).